A 475-amino-acid chain; its full sequence is Ribulose bisphosphate carboxylase large chain (475 aa).

The propeptide occupies methionine 1 to serine 2. At proline 3 the chain carries N-acetylproline. Lysine 14 carries the N6,N6,N6-trimethyllysine modification. Substrate-binding residues include asparagine 123 and threonine 173. Lysine 175 serves as the catalytic Proton acceptor. Lysine 177 contacts substrate. Mg(2+)-binding residues include lysine 201, aspartate 203, and glutamate 204. Lysine 201 bears the N6-carboxylysine mark. Residue histidine 294 is the Proton acceptor of the active site. Substrate contacts are provided by arginine 295, histidine 327, and serine 379.

Belongs to the RuBisCO large chain family. Type I subfamily. As to quaternary structure, heterohexadecamer of 8 large chains and 8 small chains; disulfide-linked. The disulfide link is formed within the large subunit homodimers. It depends on Mg(2+) as a cofactor. The disulfide bond which can form in the large chain dimeric partners within the hexadecamer appears to be associated with oxidative stress and protein turnover.

Its subcellular location is the plastid. The protein localises to the chloroplast. The catalysed reaction is 2 (2R)-3-phosphoglycerate + 2 H(+) = D-ribulose 1,5-bisphosphate + CO2 + H2O. The enzyme catalyses D-ribulose 1,5-bisphosphate + O2 = 2-phosphoglycolate + (2R)-3-phosphoglycerate + 2 H(+). Functionally, ruBisCO catalyzes two reactions: the carboxylation of D-ribulose 1,5-bisphosphate, the primary event in carbon dioxide fixation, as well as the oxidative fragmentation of the pentose substrate in the photorespiration process. Both reactions occur simultaneously and in competition at the same active site. This Stellaria media (Common chickweed) protein is Ribulose bisphosphate carboxylase large chain.